A 654-amino-acid polypeptide reads, in one-letter code: DNA ligase (654 aa).

NAD(+)-binding positions include 32-36 and 81-82; these read DAVYD and SL. Lys112 (N6-AMP-lysine intermediate) is an active-site residue. NAD(+) contacts are provided by Arg133, Glu167, and Lys306. Cys400, Cys403, Cys416, and Cys421 together coordinate Zn(2+). The BRCT domain maps to 577 to 654; it reads ESSSIFSHKT…EEELLKYLKE (78 aa).

The protein belongs to the NAD-dependent DNA ligase family. LigA subfamily. The cofactor is Mg(2+). Mn(2+) serves as cofactor.

It catalyses the reaction NAD(+) + (deoxyribonucleotide)n-3'-hydroxyl + 5'-phospho-(deoxyribonucleotide)m = (deoxyribonucleotide)n+m + AMP + beta-nicotinamide D-nucleotide.. Its function is as follows. DNA ligase that catalyzes the formation of phosphodiester linkages between 5'-phosphoryl and 3'-hydroxyl groups in double-stranded DNA using NAD as a coenzyme and as the energy source for the reaction. It is essential for DNA replication and repair of damaged DNA. In Helicobacter acinonychis (strain Sheeba), this protein is DNA ligase.